The sequence spans 556 residues: Phosphoenolpyruvate-protein phosphotransferase (556 aa).

Histidine 186 (tele-phosphohistidine intermediate) is an active-site residue. Residues arginine 288 and arginine 325 each contribute to the phosphoenolpyruvate site. 2 residues coordinate Mg(2+): glutamate 415 and aspartate 439. Residues asparagine 438 to aspartate 439 and arginine 449 each bind phosphoenolpyruvate. The active-site Proton donor is cysteine 486.

It belongs to the PEP-utilizing enzyme family. Homodimer. The cofactor is Mg(2+).

The protein resides in the cytoplasm. It catalyses the reaction L-histidyl-[protein] + phosphoenolpyruvate = N(pros)-phospho-L-histidyl-[protein] + pyruvate. In terms of biological role, general (non sugar-specific) component of the phosphoenolpyruvate-dependent sugar phosphotransferase system (sugar PTS). This major carbohydrate active-transport system catalyzes the phosphorylation of incoming sugar substrates concomitantly with their translocation across the cell membrane. Enzyme I transfers the phosphoryl group from phosphoenolpyruvate (PEP) to the phosphoryl carrier protein (HPr). The sequence is that of Phosphoenolpyruvate-protein phosphotransferase (ptsI) from Streptomyces coelicolor (strain ATCC BAA-471 / A3(2) / M145).